We begin with the raw amino-acid sequence, 150 residues long: Kirola (150 aa).

M1 carries the N-acetylmethionine modification.

The protein belongs to the MLP family. As to quaternary structure, monomer. Post-translationally, the N-terminus is blocked.

In Actinidia deliciosa (Kiwi), this protein is Kirola.